Consider the following 334-residue polypeptide: N-acetyl-gamma-glutamyl-phosphate reductase (334 aa).

Residue Cys154 is part of the active site.

It belongs to the NAGSA dehydrogenase family. Type 1 subfamily.

It is found in the cytoplasm. The enzyme catalyses N-acetyl-L-glutamate 5-semialdehyde + phosphate + NADP(+) = N-acetyl-L-glutamyl 5-phosphate + NADPH + H(+). It functions in the pathway amino-acid biosynthesis; L-arginine biosynthesis; N(2)-acetyl-L-ornithine from L-glutamate: step 3/4. In terms of biological role, catalyzes the NADPH-dependent reduction of N-acetyl-5-glutamyl phosphate to yield N-acetyl-L-glutamate 5-semialdehyde. This is N-acetyl-gamma-glutamyl-phosphate reductase from Buchnera aphidicola subsp. Acyrthosiphon pisum (strain 5A).